We begin with the raw amino-acid sequence, 446 residues long: Saccharopine dehydrogenase [NADP(+), L-glutamate-forming] (446 aa).

NADP(+) contacts are provided by residues 10 to 13 (SGFV), 33 to 35 (CRT), 54 to 55 (DV), I75, 97 to 98 (SS), 124 to 126 (LDP), and S174. Residues 98-99 (SY) and D125 contribute to the L-saccharopine site. L-saccharopine is bound by residues R223 and 244–246 (TLR).

Belongs to the saccharopine dehydrogenase family. As to quaternary structure, interacts with TRM112.

It catalyses the reaction L-saccharopine + NADP(+) + H2O = (S)-2-amino-6-oxohexanoate + L-glutamate + NADPH + H(+). It participates in amino-acid biosynthesis; L-lysine biosynthesis via AAA pathway; L-lysine from L-alpha-aminoadipate (fungal route): step 2/3. This chain is Saccharopine dehydrogenase [NADP(+), L-glutamate-forming] (LYS9), found in Saccharomyces cerevisiae (strain ATCC 204508 / S288c) (Baker's yeast).